Here is a 251-residue protein sequence, read N- to C-terminus: Prothoracicostatic peptides (251 aa).

Residues 1–22 are disordered; it reads MRKSARGQVCTEAGAGASGDWQ. The propeptide occupies 1-77; that stretch reads MRKSARGQVC…GWQDLNSAWG (77 aa). A Tryptophan amide modification is found at Trp89. Residues 93-138 constitute a propeptide that is removed on maturation; sequence GWNDMSSAWGKRGWNDMSSAWGKRGWNDMSSAWGKRGWNDMSSAWG. Trp152 carries the post-translational modification Tryptophan amide. The propeptide occupies 156-187; that stretch reads AAEPDYEEIDAAIEQLIPIQQLSDNERMEVPE. A tryptophan amide mark is found at Trp198 and Trp228. The interval 227–251 is disordered; the sequence is MWGKRSAPDADAVDDDHESSARDEA.

As to expression, prothoracicostatic peptide 5: Expressed in antennal lobe (AL), corpora cardiaca (CC), corpora allata (CA) and gnathal ganglion (GNG) (at protein level). Expression in AL detected in all animals, in CC, CA and GNG in most (at protein level). Prothoracicostatic peptide 6: Expressed in antennal lobe (AL), corpora cardiaca (CC), corpora allata (CA) and gnathal ganglion (GNG) (at protein level). Expression in AL detected in all animals, expression in GNG in most animals, in CA and CC detected in some animals (at protein level). Prothoracicostatic peptide 7: Expressed in antennal lobe (AL), corpora cardiaca (CC), corpora allata (CA) and gnathal ganglion (GNG) (at protein level). Expression in AL, CA and CC detected in most animals, expression in GNG in some animals (at protein level). Prothoracicostatic peptide precursor-related peptide 2: Expressed in antennal lobe (AL), corpora cardiaca (CC) and corpora allata (CA) with expression detected in few animals (at protein level). Not expressed in gnathal ganglion (GNG) (at protein level). Prothoracicostatic peptide 8: Expressed in antennal lobe (AL), corpora cardiaca (CC), corpora allata (CA) and gnathal ganglion (GNG) (at protein level). Expression in AL detected in all animals, expression in GNG in most animals, in CA and CC detected in some animals (at protein level). Prothoracicostatic peptide precursor-related peptide 3: Expressed in antennal lobe (AL) in few animals (at protein level). Not expressed in corpora cardiaca (CC), corpora allata (CA) and gnathal ganglion (GNG) (at protein level).

The protein localises to the secreted. This Agrotis ipsilon (Black cutworm moth) protein is Prothoracicostatic peptides.